Consider the following 320-residue polypeptide: MSRSALIENVTAMLADAGFSVSDRCATRPKSFDVAARRGSDVVLMKVLVNIDAFDAETGAEMRRLGTYLHATPLVVGLRTRDEDLDPGVVYFRHGVPVFNPDTAMELFVDGIPPLVYAAPGGLYVNIDGDVLADRREDERLSLGQLASELGVSRRTVSKYEDGMNASIEVAMRLEDLFGGELTAPVDVMDGAEDVRDTDPTPDDPEAAPEDVPVLSVLARVGFEVHPTVQAPFKAVGEAGAGHDRLLTGHSAFTEAAVKRARIMSSVGEVTHTRAVYVVDEAGRESVDDTAIVEREELANVDDSEDLRDLLADRGDLQEA.

The HTH cro/C1-type domain occupies 132-189; the sequence is LADRREDERLSLGQLASELGVSRRTVSKYEDGMNASIEVAMRLEDLFGGELTAPVDVM. Positions 143-162 form a DNA-binding region, H-T-H motif; the sequence is LGQLASELGVSRRTVSKYED.

The sequence is that of Putative HTH-type transcriptional regulatory protein VNG_2112C from Halobacterium salinarum (strain ATCC 700922 / JCM 11081 / NRC-1) (Halobacterium halobium).